The sequence spans 841 residues: Protein NLP6 (841 aa).

In terms of domain architecture, RWP-RK spans 539-624; sequence EAKTVKKSER…IDSVQGADGS (86 aa). Positions 649–682 are disordered; the sequence is NCPPTSTSPLSNLQDVKIENRDAEDSAGSSTSRA. Positions 651–662 are enriched in polar residues; the sequence is PPTSTSPLSNLQ. The PB1 domain maps to 741-823; it reads LVSIKATYRE…NTLRLSVHDV (83 aa).

The protein localises to the nucleus. Functionally, probable transcription factor. The protein is Protein NLP6 (NLP6) of Arabidopsis thaliana (Mouse-ear cress).